Reading from the N-terminus, the 224-residue chain is Putative tyrosine-protein phosphatase OCA6 (224 aa).

A Phosphothreonine modification is found at Thr-2. A Tyrosine-protein phosphatase domain is found at 8 to 170 (QFSTVQPNLY…FNSEIEVDDL (163 aa)). The active-site Phosphocysteine intermediate is the Cys-114.

Belongs to the protein-tyrosine phosphatase family.

The protein resides in the cytoplasm. The catalysed reaction is O-phospho-L-tyrosyl-[protein] + H2O = L-tyrosyl-[protein] + phosphate. Functionally, required for replication of Brome mosaic virus (BMV). The chain is Putative tyrosine-protein phosphatase OCA6 (OCA6) from Saccharomyces cerevisiae (strain ATCC 204508 / S288c) (Baker's yeast).